The primary structure comprises 598 residues: Chaperone protein DnaK (598 aa).

Thr-180 is subject to Phosphothreonine; by autocatalysis.

The protein belongs to the heat shock protein 70 family.

Its function is as follows. Acts as a chaperone. The sequence is that of Chaperone protein DnaK from Thermosipho africanus (strain TCF52B).